Reading from the N-terminus, the 3416-residue chain is Genome polyprotein (3416 aa).

Residues 1 to 34 (MAKGAVLKGKGGGPPRRVPKETAKKTRQGPGRLP) are disordered. Residues 1 to 99 (MAKGAVLKGK…NRRRGKRRST (99 aa)) are Cytoplasmic-facing. Positions 97–117 (RSTTGLLTSILLACLATLVIS) are cleaved as a propeptide — ER anchor for the capsid protein C, removed in mature form by serine protease NS3. Residues 100–120 (TGLLTSILLACLATLVISATI) traverse the membrane as a helical segment. Topologically, residues 121-243 (RRERTGDMVI…HLTRVEGWVW (123 aa)) are extracellular. N-linked (GlcNAc...) asparagine; by host glycosylation occurs at asparagine 145. A helical membrane pass occupies residues 244–261 (KNKLLTMAFCAVVWMVTD). Residue serine 262 is a topological domain, cytoplasmic. Residues 263–281 (LPTRFIVITVALCLAPTYA) form a helical membrane-spanning segment. Residues 282 to 728 (TRCTHLQNRD…HTAFGAAFNT (447 aa)) are Extracellular-facing. 6 cysteine pairs are disulfide-bonded: cysteine 284-cysteine 311, cysteine 341-cysteine 397, cysteine 341-cysteine 402, cysteine 355-cysteine 386, cysteine 373-cysteine 397, and cysteine 373-cysteine 402. A fusion peptide region spans residues 379 to 392 (DRGWGNHCGLFGKG). The N-linked (GlcNAc...) asparagine; by host glycan is linked to asparagine 435. Cystine bridges form between cysteine 467/cysteine 571 and cysteine 588/cysteine 619. The helical transmembrane segment at 729 to 749 (IFGGVGFLPRILLGVALAWLG) threads the bilayer. Over 750–756 (LNSRNPT) the chain is Cytoplasmic. Residues 757 to 777 (LSVGFLITGGLVLTMTLGVGA) traverse the membrane as a helical segment. At 778-1134 (DMGCAIDANR…RSMVLADNGA (357 aa)) the chain is on the extracellular side. Intrachain disulfides connect cysteine 781–cysteine 792, cysteine 832–cysteine 922, cysteine 957–cysteine 1002, cysteine 1059–cysteine 1108, cysteine 1070–cysteine 1092, and cysteine 1091–cysteine 1095. N-linked (GlcNAc...) asparagine; by host glycans are attached at residues asparagine 862, asparagine 985, and asparagine 1001. A helical membrane pass occupies residues 1135–1155 (MLSEGGVPGIVAVFVVLELVI). Residues 1156-1162 (RRRPTTG) lie on the Cytoplasmic side of the membrane. A helical transmembrane segment spans residues 1163-1183 (TSVVWCGVVVLGLVVTGLVTI). Residues 1184 to 1189 (EGLCRY) lie on the Lumenal side of the membrane. A helical membrane pass occupies residues 1190 to 1210 (VVAVGILMSMELGPEIVALVL). Residues 1211–1235 (LQAVFDMRTGLLVAFAVKRAYTTRE) lie on the Cytoplasmic side of the membrane. Residues 1236–1256 (AVVTYFLLLVLELGFPEASLS) form a helical membrane-spanning segment. Residues 1257-1295 (NIWKWADSLAMGTLILQACSQEGRARVGYLLAAMMTQKD) are Lumenal-facing. Residues 1296–1316 (MAIIHTGLTIFLSAATAMAVW) form a helical membrane-spanning segment. Residues 1317–1361 (SMIKGQRDQKGLSWATPLVGLFGGEGVGLRLLAFRRLAERRNRRS) lie on the Cytoplasmic side of the membrane. A helical transmembrane segment spans residues 1362-1379 (FSEPLTVVGVMLTVASGM). Residues 1380–1384 (VRHTS) are Lumenal-facing. Residues 1385-1405 (QEALCALVAGAFLLLMMVLGT) form a helical membrane-spanning segment. At 1406–1458 (RKMQLIAEWCGEVEWNPDLVNEGGEVNLKVRQDAMGNLHLTEVEKEERAMALW) the chain is on the cytoplasmic side. Residues 1412-1451 (AEWCGEVEWNPDLVNEGGEVNLKVRQDAMGNLHLTEVEKE) are interacts with and activates NS3 protease. Positions 1459-1479 (LLAGLVASAFHWAGILIVLAI) form an intramembrane region, helical. Residues 1480 to 2162 (WTFFEMLSSG…RMAERDAPEA (683 aa)) lie on the Cytoplasmic side of the membrane. The Peptidase S7 domain occupies 1492–1671 (SELVFSGQGT…EAEKSRPELP (180 aa)). Catalysis depends on charge relay system; for serine protease NS3 activity residues histidine 1545, aspartate 1569, and serine 1629. Positions 1677–1833 (TGWMSKGQIT…ESNGAIMSEE (157 aa)) constitute a Helicase ATP-binding domain. 1690–1697 (MHPGSGKT) is a binding site for ATP. The short motif at 1781–1784 (DEAH) is the DEAH box element. Positions 1844-2002 (GFDWITEYEG…TLRGPVATFY (159 aa)) constitute a Helicase C-terminal domain. N6-acetyllysine; by host is present on lysine 1885. A helical membrane pass occupies residues 2163–2183 (FLTIVEVAVLGVATLGILWCF). Topologically, residues 2184 to 2191 (VARTSVSR) are lumenal. The helical intramembrane region spans 2192–2211 (MFLGTVVLFAALLLLWIGGV). Position 2212 (aspartate 2212) is a topological domain, lumenal. Residues 2213-2233 (YGYMAGIALIFYIFLTVLQPE) form a helical membrane-spanning segment. Over 2234-2246 (PGKQRSSDDNRLA) the chain is Cytoplasmic. The helical transmembrane segment at 2247-2267 (YFLLGLLSLAGLVTANEMGML) threads the bilayer. Over 2268–2301 (DKTKADLAGLMWHGEQRHPAWEEWTNVDIQPARS) the chain is Lumenal. The helical intramembrane region spans 2302–2322 (WGTYVLIVSLFTPYMLHQLQT). Over 2323–2345 (KIQQLVNSSVASGAQAMRDLGGG) the chain is Lumenal. The helical intramembrane region spans 2346–2366 (TPFFGVAGHVIALGVTSLVGA). Over 2367 to 2368 (TP) the chain is Lumenal. The chain crosses the membrane as a helical span at residues 2369–2389 (LSLGLGVALAAFHLAIVASGL). The Cytoplasmic portion of the chain corresponds to 2390–2432 (EAELTQRAHRVFFSAMVKNPMVDGDVINPFPDGEPKPVLYERR). Residues 2433 to 2453 (MSLILAIALCMVSVVLNRTAA) traverse the membrane as a helical segment. Topologically, residues 2454 to 2476 (SMTEAGAVGLAALGQLVHPETET) are lumenal. Residues 2477–2497 (LWTMPMACGMAGLVRGSFWGL) form a helical membrane-spanning segment. Residues 2498 to 3416 (LPMGHRLWLK…WDLKLESNII (919 aa)) are Cytoplasmic-facing. Positions 2514–2778 (GGADGETLGD…EVDLGTGTRC (265 aa)) constitute an mRNA cap 0-1 NS5-type MT domain. Position 2569 (serine 2569) interacts with S-adenosyl-L-methionine. Serine 2569 bears the Phosphoserine mark. Lysine 2574 (for 2'-O-MTase activity) is an active-site residue. 6 residues coordinate S-adenosyl-L-methionine: glycine 2599, tryptophan 2600, threonine 2617, isoleucine 2618, aspartate 2644, and valine 2645. The active-site For 2'-O-MTase activity is the aspartate 2659. Isoleucine 2660 provides a ligand contact to S-adenosyl-L-methionine. Catalysis depends on for 2'-O-MTase activity residues lysine 2696 and glutamate 2732. The interaction with host SCRIB stretch occupies residues 2732–2736 (EMYFS). Tyrosine 2734 provides a ligand contact to S-adenosyl-L-methionine. Zn(2+) contacts are provided by glutamate 2952, histidine 2956, cysteine 2961, and cysteine 2964. Positions 3042-3191 (GLFYADDTAG…RPIDDRFGKA (150 aa)) constitute a RdRp catalytic domain. The Zn(2+) site is built by histidine 3226, cysteine 3242, and cysteine 3361.

This sequence in the N-terminal section; belongs to the class I-like SAM-binding methyltransferase superfamily. mRNA cap 0-1 NS5-type methyltransferase family. In terms of assembly, homodimer. Interacts (via N-terminus) with host EXOC1 (via C-terminus); this interaction results in EXOC1 degradation through the proteasome degradation pathway. Forms heterodimers with envelope protein E in the endoplasmic reticulum and Golgi. As to quaternary structure, homodimer; in the endoplasmic reticulum and Golgi. Interacts with protein prM. Interacts with non-structural protein 1. In terms of assembly, homodimer; Homohexamer when secreted. Interacts with envelope protein E. Interacts (via N-terminus) with serine protease NS3. As to quaternary structure, forms a heterodimer with serine protease NS3. May form homooligomers. In terms of assembly, forms a heterodimer with NS2B. Interacts with NS4B. Interacts with unphosphorylated RNA-directed RNA polymerase NS5; this interaction stimulates RNA-directed RNA polymerase NS5 guanylyltransferase activity. Interacts with serine protease NS3. As to quaternary structure, homodimer. Interacts with host STAT2; this interaction inhibits the phosphorylation of the latter, and, when all viral proteins are present (polyprotein), targets STAT2 for degradation. Interacts with serine protease NS3. In terms of processing, specific enzymatic cleavages in vivo yield mature proteins. Cleavages in the lumen of endoplasmic reticulum are performed by host signal peptidase, whereas cleavages in the cytoplasmic side are performed by serine protease NS3. Signal cleavage at the 2K-4B site requires a prior NS3 protease-mediated cleavage at the 4A-2K site. Post-translationally, cleaved in post-Golgi vesicles by a host furin, releasing the mature small envelope protein M, and peptide pr. This cleavage is incomplete as up to 30% of viral particles still carry uncleaved prM. N-glycosylated. In terms of processing, N-glycosylated. The excreted form is glycosylated and this is required for efficient secretion of the protein from infected cells. Post-translationally, acetylated by host KAT5. Acetylation modulates NS3 RNA-binding and unwinding activities and plays an important positive role for viral replication. Phosphorylated on serines residues. This phosphorylation may trigger NS5 nuclear localization.

The protein localises to the virion. It localises to the host nucleus. Its subcellular location is the host cytoplasm. It is found in the host perinuclear region. The protein resides in the secreted. The protein localises to the virion membrane. It localises to the host endoplasmic reticulum membrane. It catalyses the reaction Selective hydrolysis of -Xaa-Xaa-|-Yaa- bonds in which each of the Xaa can be either Arg or Lys and Yaa can be either Ser or Ala.. The catalysed reaction is RNA(n) + a ribonucleoside 5'-triphosphate = RNA(n+1) + diphosphate. It carries out the reaction a ribonucleoside 5'-triphosphate + H2O = a ribonucleoside 5'-diphosphate + phosphate + H(+). The enzyme catalyses ATP + H2O = ADP + phosphate + H(+). It catalyses the reaction a 5'-end (5'-triphosphoguanosine)-ribonucleoside in mRNA + S-adenosyl-L-methionine = a 5'-end (N(7)-methyl 5'-triphosphoguanosine)-ribonucleoside in mRNA + S-adenosyl-L-homocysteine. The catalysed reaction is a 5'-end (N(7)-methyl 5'-triphosphoguanosine)-ribonucleoside in mRNA + S-adenosyl-L-methionine = a 5'-end (N(7)-methyl 5'-triphosphoguanosine)-(2'-O-methyl-ribonucleoside) in mRNA + S-adenosyl-L-homocysteine + H(+). In terms of biological role, plays a role in virus budding by binding to the cell membrane and gathering the viral RNA into a nucleocapsid that forms the core of a mature virus particle. During virus entry, may induce genome penetration into the host cytoplasm after hemifusion induced by the surface proteins. Can migrate to the cell nucleus where it modulates host functions. Its function is as follows. Inhibits RNA silencing by interfering with host Dicer. Functionally, prevents premature fusion activity of envelope proteins in trans-Golgi by binding to envelope protein E at pH6.0. After virion release in extracellular space, gets dissociated from E dimers. Acts as a chaperone for envelope protein E during intracellular virion assembly by masking and inactivating envelope protein E fusion peptide. prM is the only viral peptide matured by host furin in the trans-Golgi network probably to avoid catastrophic activation of the viral fusion activity in acidic Golgi compartment prior to virion release. prM-E cleavage is inefficient, and many virions are only partially matured. These uncleaved prM would play a role in immune evasion. In terms of biological role, may play a role in virus budding. Exerts cytotoxic effects by activating a mitochondrial apoptotic pathway through M ectodomain. May display a viroporin activity. Its function is as follows. Binds to host cell surface receptor and mediates fusion between viral and cellular membranes. Envelope protein is synthesized in the endoplasmic reticulum in the form of heterodimer with protein prM. They play a role in virion budding in the ER, and the newly formed immature particle is covered with 60 spikes composed of heterodimer between precursor prM and envelope protein E. The virion is transported to the Golgi apparatus where the low pH causes dissociation of PrM-E heterodimers and formation of E homodimers. prM-E cleavage is inefficient, and many virions are only partially matured. These uncleaved prM would play a role in immune evasion. Functionally, involved in immune evasion, pathogenesis and viral replication. Once cleaved off the polyprotein, is targeted to three destinations: the viral replication cycle, the plasma membrane and the extracellular compartment. Essential for viral replication. Required for formation of the replication complex and recruitment of other non-structural proteins to the ER-derived membrane structures. Excreted as a hexameric lipoparticle that plays a role against host immune response. Antagonizing the complement function. Binds to the host macrophages and dendritic cells. Inhibits signal transduction originating from Toll-like receptor 3 (TLR3). Component of the viral RNA replication complex that functions in virion assembly and antagonizes the host immune response. In terms of biological role, required cofactor for the serine protease function of NS3. May have membrane-destabilizing activity and form viroporins. Its function is as follows. Displays three enzymatic activities: serine protease, NTPase and RNA helicase. NS3 serine protease, in association with NS2B, performs its autocleavage and cleaves the polyprotein at dibasic sites in the cytoplasm: C-prM, NS2A-NS2B, NS2B-NS3, NS3-NS4A, NS4A-2K and NS4B-NS5. NS3 RNA helicase binds RNA and unwinds dsRNA in the 3' to 5' direction. Functionally, regulates the ATPase activity of the NS3 helicase activity. NS4A allows NS3 helicase to conserve energy during unwinding. Functions as a signal peptide for NS4B and is required for the interferon antagonism activity of the latter. In terms of biological role, induces the formation of ER-derived membrane vesicles where the viral replication takes place. Inhibits interferon (IFN)-induced host STAT1 phosphorylation and nuclear translocation, thereby preventing the establishment of cellular antiviral state by blocking the IFN-alpha/beta pathway. Inhibits STAT2 translocation in the nucleus after IFN-alpha treatment. Its function is as follows. Replicates the viral (+) and (-) RNA genome, and performs the capping of genomes in the cytoplasm. NS5 methylates viral RNA cap at guanine N-7 and ribose 2'-O positions. Besides its role in RNA genome replication, also prevents the establishment of cellular antiviral state by blocking the interferon-alpha/beta (IFN-alpha/beta) signaling pathway. Inhibits host TYK2 and STAT2 phosphorylation, thereby preventing activation of JAK-STAT signaling pathway. The sequence is that of Genome polyprotein from Homo sapiens (Human).